The chain runs to 157 residues: Probable intracellular pathogenesis-related protein T1 (157 aa).

N-linked (GlcNAc...) asparagine glycosylation is found at Asn79 and Asn117.

This sequence belongs to the BetVI family.

The protein is Probable intracellular pathogenesis-related protein T1 (PCKR3) of Catharanthus roseus (Madagascar periwinkle).